The chain runs to 2176 residues: Nonribosomal peptide synthetase sirP (2176 aa).

Basic and acidic residues predominate over residues 16–31 (EGLTGDDHSPESRRDF). Residues 16–38 (EGLTGDDHSPESRRDFPMSQSSG) are disordered. An adenylation 1 region spans residues 51–434 (FERIASQFPE…LGRKDRVVKN (384 aa)). Residues 534–610 (SSPSSNLYVV…RICDTLSATI (77 aa)) enclose the Carrier 1 domain. Serine 571 carries the post-translational modification O-(pantetheine 4'-phosphoryl)serine. A condensation 1 region spans residues 643–1073 (YMTAIQVNMI…MMNQLEINDL (431 aa)). Residues 1094–1474 (FEEVVDTWPD…GRIDNQVKVR (381 aa)) form an adenylation 2 region. The 77-residue stretch at 1570–1646 (PIEGTTERII…DLALAIDKHI (77 aa)) folds into the Carrier 2 domain. Serine 1606 bears the O-(pantetheine 4'-phosphoryl)serine mark. Positions 1661-2070 (QNTVLSHLEE…VQLMAAFRYL (410 aa)) are condensation 2. The Carrier 3 domain maps to 2106–2176 (QEMIDLVREA…TAELIAGAVE (71 aa)). Serine 2140 carries the post-translational modification O-(pantetheine 4'-phosphoryl)serine.

This sequence belongs to the NRP synthetase family.

Its pathway is mycotoxin biosynthesis. Nonribosomal peptide synthetase; part of the gene cluster that mediates the biosynthesis of sirodesmin PL, an epipolythiodioxopiperazine (ETP) characterized by a disulfide bridged cyclic dipeptide and that acts as a phytotoxin which is involved in the blackleg didease of canola. SirD catalyzes the O-prenylation of L-tyrosine (L-Tyr) in the presence of dimethylallyl diphosphate (DMAPP) to yield 4-O-dimethylallyl-L-Tyr, and therefore represents probably the first pathway-specific enzyme in the biosynthesis of sirodesmin PL. 4-O-dimethylallyl-L-Tyr, then undergoes condensation with L-Ser in a reaction catalyzed by the non-ribosomal peptide synthase sirP to form the diketopiperazine (DKP) backbone. Further bishydroxylation of the DKP performed by the cytochrome P450 monooxygenase sirC leads to the production of the intermediate phomamide. This step is essential to form the reactive thiol group required for toxicity of sirodesmin PL. The next steps of sirodesmin biosynthesis are not well understood yet, but some predictions could be made from intermediate compounds identification. Phomamide is converted into phomalizarine via oxidation, probably by sirT. Further oxidation, methylation (by sirM or sirN) and reduction steps convert phomalizarine to deacetyl sirodesmin. Finally, acetyltransferase sirH probably acetylates deacetyl sirodesmin to produce sirodesmin PL. This Leptosphaeria maculans (Blackleg fungus) protein is Nonribosomal peptide synthetase sirP.